A 436-amino-acid polypeptide reads, in one-letter code: Histidine--tRNA ligase (436 aa).

Belongs to the class-II aminoacyl-tRNA synthetase family. Homodimer.

The protein localises to the cytoplasm. It catalyses the reaction tRNA(His) + L-histidine + ATP = L-histidyl-tRNA(His) + AMP + diphosphate + H(+). The polypeptide is Histidine--tRNA ligase (Prochlorococcus marinus (strain MIT 9303)).